The following is a 525-amino-acid chain: MEKDHLVEEEKKDKVESEKPEEGVTVPKVESNDDIHQTDTPKVDSTTSEGKLKDPVAVERPSINSTNTSSSGGFGNTVNDLSQPSTRPVTTAETSTNSNLPWDGNQANRNLNSQSYDLRVHLLKSLGIEDISRIDIADNKLLERFFSLHIEREQKEIEKLKTKNLEKLELIVDKFVSNEKFTNDTLNKLLELISSKSIDSHDLLGSSSIQLKRTEHSPNRLMSPRGHKRYKSEIPTVPETQYSHINYNIHGQPVNMVYHQAYQQVTPQTYYVPQGNQAWHQGSYTQGNRATFQPPSLANSNINNSEDVKLQEGVKVEPSGRARQRSSTSLGASLSTSNSTSNLSNTMKAATANEGKDTGSNDGHHTGSYGASNASNVMPSQVNNPNYMTYGSVRGGPYVMVQQPPGQQMATQYIPAGNQGFYQSVVPNQGHMNGMVASSQGYQANTPQPATSDNMVMLGNQYRGNETLHQDATPSLSSSTSQKRQGHRRTQSANVVLSTGRSPNRMNMQRQVNFLIHTPKHPPPT.

2 stretches are compositionally biased toward basic and acidic residues: residues 1 to 22 (MEKD…KPEE) and 30 to 42 (ESND…DTPK). Disordered stretches follow at residues 1-108 (MEKD…NQAN), 285-376 (TQGN…NASN), and 467-506 (TLHQ…PNRM). Low complexity predominate over residues 62–71 (SINSTNTSSS). Polar residues-rich tracts occupy residues 78-108 (VNDL…NQAN) and 285-305 (TQGN…INNS). A compositionally biased stretch (basic and acidic residues) spans 306–320 (EDVKLQEGVKVEPSG). Low complexity predominate over residues 326–346 (SSTSLGASLSTSNSTSNLSNT). Over residues 354–365 (EGKDTGSNDGHH) the composition is skewed to basic and acidic residues. 2 stretches are compositionally biased toward polar residues: residues 470–483 (QDAT…TSQK) and 491–506 (QSAN…PNRM).

It belongs to the POG1 family.

The protein localises to the nucleus. In terms of biological role, transcriptional activator which promotes cell cycle recovery, after pheromone induced G1 arrest. May also be involved in stress-resistance. The polypeptide is Transcriptional activator POG1 (POG1) (Candida glabrata (strain ATCC 2001 / BCRC 20586 / JCM 3761 / NBRC 0622 / NRRL Y-65 / CBS 138) (Yeast)).